Here is a 148-residue protein sequence, read N- to C-terminus: Small ribosomal subunit protein uS7m (148 aa).

This sequence belongs to the universal ribosomal protein uS7 family. Part of the small ribosomal subunit.

It localises to the mitochondrion. In terms of biological role, one of the primary rRNA binding proteins, it binds directly to 18S rRNA where it nucleates assembly of the head domain of the small subunit. In Triticum aestivum (Wheat), this protein is Small ribosomal subunit protein uS7m (RPS7).